The chain runs to 451 residues: tRNA-2-methylthio-N(6)-dimethylallyladenosine synthase (451 aa).

The region spanning 6–122 is the MTTase N-terminal domain; it reads RRYHIITFGC…LDQLLEQVWA (117 aa). Residues Cys-15, Cys-51, Cys-85, Cys-157, Cys-161, and Cys-164 each coordinate [4Fe-4S] cluster. Positions 143-384 constitute a Radical SAM core domain; sequence RESTVSAWVN…STQAMERSQR (242 aa). A TRAM domain is found at 383 to 447; it reads QRYLGRVEEV…AFSLTGEALS (65 aa).

Belongs to the methylthiotransferase family. MiaB subfamily. In terms of assembly, monomer. The cofactor is [4Fe-4S] cluster.

It is found in the cytoplasm. The catalysed reaction is N(6)-dimethylallyladenosine(37) in tRNA + (sulfur carrier)-SH + AH2 + 2 S-adenosyl-L-methionine = 2-methylsulfanyl-N(6)-dimethylallyladenosine(37) in tRNA + (sulfur carrier)-H + 5'-deoxyadenosine + L-methionine + A + S-adenosyl-L-homocysteine + 2 H(+). In terms of biological role, catalyzes the methylthiolation of N6-(dimethylallyl)adenosine (i(6)A), leading to the formation of 2-methylthio-N6-(dimethylallyl)adenosine (ms(2)i(6)A) at position 37 in tRNAs that read codons beginning with uridine. The chain is tRNA-2-methylthio-N(6)-dimethylallyladenosine synthase from Synechocystis sp. (strain ATCC 27184 / PCC 6803 / Kazusa).